The chain runs to 451 residues: Bacteriochlorophyllide d C-8(2)-methyltransferase (451 aa).

The B12-binding domain occupies 1-118 (MDDDSNQKPL…DDVANNRLKE (118 aa)). Residues 148-377 (VDGTKSIPIY…ALHLVIKSDR (230 aa)) enclose the Radical SAM core domain. 3 residues coordinate [4Fe-4S] cluster: Cys-162, Cys-166, and Cys-169.

Belongs to the radical SAM superfamily. [4Fe-4S] cluster serves as cofactor.

It is found in the cytoplasm. It catalyses the reaction 8,12-diethyl-3-vinylbacteriochlorophyllide d + S-adenosyl-L-methionine = 12-ethyl-8-propyl-3-vinylbacteriochlorophyllide d + S-adenosyl-L-homocysteine + H(+). It carries out the reaction 12-ethyl-8-propyl-3-vinylbacteriochlorophyllide d + S-adenosyl-L-methionine = 12-ethyl-8-isobutyl-3-vinylbacteriochlorophyllide d + S-adenosyl-L-homocysteine + H(+). Its pathway is porphyrin-containing compound metabolism; bacteriochlorophyll biosynthesis (light-independent). In terms of biological role, involved in the biosynthesis of the major light-harvesting pigment bacteriochlorophyll c (BChlc), which confers a significant competitive advantage to green sulfur bacteria living at limiting red and near-infrared light intensities. BchQ is a methyltransferase that adds two consecutive methyl groups to the ethyl carbon at the C-8(2) position of 8,12-diethyl-3-vinylbacteriochlorophyllide d to yield 12-ethyl-8-isobutyl-3-vinylbacteriochlorophyllide d. The chain is Bacteriochlorophyllide d C-8(2)-methyltransferase from Chlorobaculum tepidum (strain ATCC 49652 / DSM 12025 / NBRC 103806 / TLS) (Chlorobium tepidum).